Here is a 1308-residue protein sequence, read N- to C-terminus: Receptor tyrosine-protein kinase erbB-4 (1308 aa).

The first 25 residues, 1-25, serve as a signal peptide directing secretion; that stretch reads MKLATGLWVWGSLLMAAGTVQPSAS. At 26–652 the chain is on the extracellular side; it reads QSVCAGTENK…TLPQHARTPL (627 aa). A disulfide bridge links Cys29 with Cys56. Asn138, Asn174, and Asn181 each carry an N-linked (GlcNAc...) asparagine glycan. Cystine bridges form between Cys156/Cys186, Cys189/Cys197, Cys193/Cys205, Cys213/Cys221, Cys217/Cys229, Cys230/Cys238, Cys234/Cys246, Cys249/Cys258, Cys262/Cys289, Cys293/Cys304, Cys308/Cys323, and Cys326/Cys330. The N-linked (GlcNAc...) asparagine glycan is linked to Asn253. N-linked (GlcNAc...) asparagine glycans are attached at residues Asn410, Asn473, and Asn495. 10 disulfide bridges follow: Cys503-Cys512, Cys507-Cys520, Cys523-Cys532, Cys536-Cys552, Cys555-Cys569, Cys559-Cys577, Cys580-Cys589, Cys593-Cys614, Cys617-Cys625, and Cys621-Cys633. The N-linked (GlcNAc...) asparagine glycan is linked to Asn548. A glycan (N-linked (GlcNAc...) asparagine) is linked at Asn576. An N-linked (GlcNAc...) asparagine glycan is attached at Asn620. The hydrophobic stretch at 653 to 673 threads the membrane; that stretch reads IAAGVIGGLFILVIMALTFAV. The Cytoplasmic segment spans residues 674-1308; it reads YVRRKSIKKK…PPYRHRNTVV (635 aa). The Nuclear localization signal motif lies at 676-684; that stretch reads RRKSIKKKR. The 268-residue stretch at 718 to 985 folds into the Protein kinase domain; sequence LKRVKVLGSG…RMARDPQRYL (268 aa). ATP is bound by residues 724–732, Lys751, 797–799, and 843–848; these read LGSGAFGTV, QLM, and DLAARN. Asp843 (proton acceptor) is an active-site residue. Phosphotyrosine; by autocatalysis is present on residues Tyr875, Tyr1035, and Tyr1056. The PPxy motif 1 motif lies at 1032 to 1035; the sequence is PPIY. The segment at 1117-1149 is disordered; that stretch reads PHVQEDSSTQRYSADPTVFAPERNPRGELDEEG. A phosphotyrosine; by autocatalysis mark is found at Tyr1150, Tyr1162, Tyr1188, Tyr1202, Tyr1242, Tyr1258, and Tyr1284. Residues 1282 to 1285 carry the PPxY motif 2 motif; sequence PEYL. The PDZ-binding motif lies at 1290–1292; the sequence is LKP.

This sequence belongs to the protein kinase superfamily. Tyr protein kinase family. EGF receptor subfamily. As to quaternary structure, monomer in the absence of bound ligand. Homodimer or heterodimer with another ERBB family member upon ligand binding, thus forming heterotetramers. Interacts with EGFR and ERBB2. Interacts with DLG2 (via its PDZ domain), DLG3 (via its PDZ domain), DLG4 (via its PDZ domain) and SNTB2 (via its PDZ domain). Interacts with MUC1. Interacts (via its PPxy motifs) with WWOX. Interacts (via the PPxY motif 3 of isoform JM-A CYT-2) with YAP1 (via the WW domain 1 of isoform 1). Interacts (isoform JM-A CYT-1 and isoform JM-B CYT-1) with WWP1. Interacts (via its intracellular domain) with TRIM28. Interacts (via the intracellular domains of both CYT-1 and CYT-2 isoforms) with KAP1; the interaction does not phosphorylate KAP1 but represses ERBB4-mediated transcriptional activity. Interacts with PRPU, DDX23, MATR3, RBM15, ILF3, KAP1, U5S1, U2SURP, ITCH, HNRNPU, AP2A1, NULC, LEO1, WWP2, IGHG1, HXK1, GRB7 and SRRT. Interacts (phosphorylated isoform JM-A CYT-1 and isoform JM-B CYT-1) with PIK3R1. Interacts with SHC1. Interacts with GRB2. Interacts (soluble intracellular domain) with BCL2. Interacts (phosphorylated) with STAT1. Interacts with CBFA2T3. Interacts (soluble intracellular domain) with STAT5A. Isoform JM-A CYT-1 and isoform JM-A CYT-2 are processed by ADAM17. Proteolytic processing in response to ligand or 12-O-tetradecanoylphorbol-13-acetate stimulation results in the production of 120 kDa soluble receptor forms and intermediate membrane-anchored 80 kDa fragments (m80HER4), which are further processed by a presenilin-dependent gamma-secretase to release a cytoplasmic intracellular domain (E4ICD; E4ICD1/s80Cyt1 or E4ICD2/s80Cyt2, depending on the isoform). Membrane-anchored 80 kDa fragments of the processed isoform JM-A CYT-1 are more readily degraded by the proteasome than fragments of isoform JM-A CYT-2, suggesting a prevalence of E4ICD2 over E4ICD1. Isoform JM-B CYT-1 and isoform JM-B CYT-2 lack the ADAM17 cleavage site and are not processed by ADAM17, precluding further processing by gamma-secretase. In terms of processing, autophosphorylated on tyrosine residues in response to ligand binding. Autophosphorylation occurs in trans, i.e. one subunit of the dimeric receptor phosphorylates tyrosine residues on the other subunit. Ligands trigger phosphorylation at specific tyrosine residues, thereby creating binding sites for scaffold proteins and effectors. Constitutively phosphorylated at a basal level when overexpressed in heterologous systems; ligand binding leads to increased phosphorylation. Phosphorylation at Tyr-1035 is important for interaction with STAT1. Phosphorylation at Tyr-1056 is important for interaction with PIK3R1. Phosphorylation at Tyr-1242 is important for interaction with SHC1. Phosphorylation at Tyr-1188 may also contribute to the interaction with SHC1. Isoform JM-A CYT-2 is constitutively phosphorylated on tyrosine residues in a ligand-independent manner. E4ICD2 but not E4ICD1 is phosphorylated on tyrosine residues. Post-translationally, ubiquitinated. During mitosis, the ERBB4 intracellular domain is ubiquitinated by the APC/C complex and targeted to proteasomal degradation. Isoform JM-A CYT-1 and isoform JM-B CYT-1 are ubiquitinated by WWP1. The ERBB4 intracellular domain (E4ICD1) is ubiquitinated, and this involves NEDD4. In terms of tissue distribution, isoform JM-A CYT-2 and isoform JM-B CYT-2 are expressed in cerebellum, cerebral cortex, spinal cord, medulla oblongata and eye, but the kidney expresses solely isoform JM-A CYT-2 and the heart solely isoform JM-B CYT-2.

Its subcellular location is the cell membrane. The protein localises to the nucleus. It localises to the mitochondrion. It catalyses the reaction L-tyrosyl-[protein] + ATP = O-phospho-L-tyrosyl-[protein] + ADP + H(+). With respect to regulation, binding of a cognate ligand leads to dimerization and activation by autophosphorylation on tyrosine residues. In vitro kinase activity is increased by Mg(2+). In terms of biological role, tyrosine-protein kinase that plays an essential role as cell surface receptor for neuregulins and EGF family members and regulates development of the heart, the central nervous system and the mammary gland, gene transcription, cell proliferation, differentiation, migration and apoptosis. Required for normal cardiac muscle differentiation during embryonic development, and for postnatal cardiomyocyte proliferation. Required for normal development of the embryonic central nervous system, especially for normal neural crest cell migration and normal axon guidance. Required for mammary gland differentiation, induction of milk proteins and lactation. Acts as cell-surface receptor for the neuregulins NRG1, NRG2, NRG3 and NRG4 and the EGF family members BTC, EREG and HBEGF. Ligand binding triggers receptor dimerization and autophosphorylation at specific tyrosine residues that then serve as binding sites for scaffold proteins and effectors. Ligand specificity and signaling is modulated by alternative splicing, proteolytic processing, and by the formation of heterodimers with other ERBB family members, thereby creating multiple combinations of intracellular phosphotyrosines that trigger ligand- and context-specific cellular responses. Mediates phosphorylation of SHC1 and activation of the MAP kinases MAPK1/ERK2 and MAPK3/ERK1. Isoform JM-A CYT-1 and isoform JM-B CYT-1 phosphorylate PIK3R1, leading to the activation of phosphatidylinositol 3-kinase and AKT1 and protect cells against apoptosis. Isoform JM-A CYT-1 and isoform JM-B CYT-1 mediate reorganization of the actin cytoskeleton and promote cell migration in response to NRG1. Isoform JM-A CYT-2 and isoform JM-B CYT-2 lack the phosphotyrosine that mediates interaction with PIK3R1, and hence do not phosphorylate PIK3R1, do not protect cells against apoptosis, and do not promote reorganization of the actin cytoskeleton and cell migration. Proteolytic processing of isoform JM-A CYT-1 and isoform JM-A CYT-2 gives rise to the corresponding soluble intracellular domains (4ICD) that translocate to the nucleus, promote nuclear import of STAT5A, activation of STAT5A, mammary epithelium differentiation, cell proliferation and activation of gene expression. The ERBB4 soluble intracellular domains (4ICD) colocalize with STAT5A at the CSN2 promoter to regulate transcription of milk proteins during lactation. The ERBB4 soluble intracellular domains can also translocate to mitochondria and promote apoptosis. The protein is Receptor tyrosine-protein kinase erbB-4 (Erbb4) of Mus musculus (Mouse).